Reading from the N-terminus, the 156-residue chain is Ribosomal RNA large subunit methyltransferase H (156 aa).

S-adenosyl-L-methionine-binding positions include glycine 104 and 123–128 (LSPMVM).

This sequence belongs to the RNA methyltransferase RlmH family. In terms of assembly, homodimer.

Its subcellular location is the cytoplasm. It catalyses the reaction pseudouridine(1915) in 23S rRNA + S-adenosyl-L-methionine = N(3)-methylpseudouridine(1915) in 23S rRNA + S-adenosyl-L-homocysteine + H(+). Functionally, specifically methylates the pseudouridine at position 1915 (m3Psi1915) in 23S rRNA. In Bdellovibrio bacteriovorus (strain ATCC 15356 / DSM 50701 / NCIMB 9529 / HD100), this protein is Ribosomal RNA large subunit methyltransferase H.